A 397-amino-acid polypeptide reads, in one-letter code: Acetate kinase (397 aa).

Position 7 (N7) interacts with Mg(2+). K14 contacts ATP. Residue R91 coordinates substrate. The active-site Proton donor/acceptor is the D147. Residues 207-211 (HLGNG), 282-284 (DFR), and 330-334 (GLGEN) contribute to the ATP site. E383 contacts Mg(2+).

It belongs to the acetokinase family. Homodimer. The cofactor is Mg(2+). Mn(2+) is required as a cofactor.

It is found in the cytoplasm. It catalyses the reaction acetate + ATP = acetyl phosphate + ADP. It participates in metabolic intermediate biosynthesis; acetyl-CoA biosynthesis; acetyl-CoA from acetate: step 1/2. In terms of biological role, catalyzes the formation of acetyl phosphate from acetate and ATP. Can also catalyze the reverse reaction. The protein is Acetate kinase of Moorella thermoacetica (strain ATCC 39073 / JCM 9320).